The following is a 589-amino-acid chain: Kelch-like protein 25 (589 aa).

The BTB domain maps to 46-114 (TDVTLWAGDR…AYSSRIAINE (69 aa)). The BACK domain occupies 149 to 250 (CLGMMLLSDA…LPSDCLQEAV (102 aa)). Kelch repeat units follow at residues 296–340 (TLLI…AIGC), 341–388 (KVYV…ELEN), 389–444 (CLYV…SAKL), 446–492 (LFVF…VLGS), 494–538 (IFIM…ASGN), and 539–585 (KLYV…STWK).

Component of the BCR(KLHL25) E3 ubiquitin ligase complex, at least composed of CUL3, KLHL25 and RBX1.

Its pathway is protein modification; protein ubiquitination. Substrate-specific adapter of a BCR (BTB-CUL3-RBX1) E3 ubiquitin ligase complex involved in various processes, such as translation homeostasis and lipid synthesis. The BCR(KLHL25) ubiquitin ligase complex acts by mediating ubiquitination of hypophosphorylated EIF4EBP1 (4E-BP1): ubiquitination and subsequent degradation of hypophosphorylated EIF4EBP1 (4E-BP1) probably serves as a homeostatic mechanism to maintain translation and prevent eIF4E inhibition when eIF4E levels are low. The BCR(KLHL25) complex does not target EIF4EBP1 (4E-BP1) when it is hyperphosphorylated or associated with eIF4E. The BCR(KLHL25) complex also acts as a regulator of lipid synthesis by mediating ubiquitination and degradation of ACLY, thereby inhibiting lipid synthesis. BCR(KLHL25)-mediated degradation of ACLY promotes fatty acid oxidation and is required for differentiation of inducible regulatory T (iTreg) cells. The sequence is that of Kelch-like protein 25 from Homo sapiens (Human).